Here is a 441-residue protein sequence, read N- to C-terminus: Chromosomal replication initiator protein DnaA (441 aa).

The tract at residues 1-80 (MQNDVLARWE…MHQEISLQFI (80 aa)) is domain I, interacts with DnaA modulators. Positions 80 to 102 (ILAGQEVDQPKPKERSSEETYIN) are domain II. The tract at residues 103–320 (ILNPRYTFDT…GALIRVSAFS (218 aa)) is domain III, AAA+ region. ATP is bound by residues Gly-147, Gly-149, Lys-150, and Thr-151. The segment at 321-441 (SLEQRDATPQ…IKELKKRIGE (121 aa)) is domain IV, binds dsDNA.

Belongs to the DnaA family. Oligomerizes as a right-handed, spiral filament on DNA at oriC.

The protein resides in the cytoplasm. In terms of biological role, plays an essential role in the initiation and regulation of chromosomal replication. ATP-DnaA binds to the origin of replication (oriC) to initiate formation of the DNA replication initiation complex once per cell cycle. Binds the DnaA box (a 9 base pair repeat at the origin) and separates the double-stranded (ds)DNA. Forms a right-handed helical filament on oriC DNA; dsDNA binds to the exterior of the filament while single-stranded (ss)DNA is stabiized in the filament's interior. The ATP-DnaA-oriC complex binds and stabilizes one strand of the AT-rich DNA unwinding element (DUE), permitting loading of DNA polymerase. After initiation quickly degrades to an ADP-DnaA complex that is not apt for DNA replication. Binds acidic phospholipids. This is Chromosomal replication initiator protein DnaA from Desulforamulus reducens (strain ATCC BAA-1160 / DSM 100696 / MI-1) (Desulfotomaculum reducens).